A 139-amino-acid chain; its full sequence is Heavy metal-associated isoprenylated plant protein 13 (139 aa).

Residues 3–70 (PMKAVLQLSI…LCNTELVSVE (68 aa)) enclose the HMA domain. Positions 70-94 (EVVKPPEKKPEPEKPAPPKPAPAPA) are disordered. Over residues 73-85 (KPPEKKPEPEKPA) the composition is skewed to basic and acidic residues. The residue at position 136 (C136) is a Cysteine methyl ester. C136 is lipidated: S-farnesyl cysteine. A propeptide spans 137-139 (VIM) (removed in mature form).

The protein belongs to the HIPP family.

Functionally, probable heavy-metal-binding protein. The sequence is that of Heavy metal-associated isoprenylated plant protein 13 from Arabidopsis thaliana (Mouse-ear cress).